The chain runs to 190 residues: MTASASSFSSSQGVQQPSIYSFSQITRSLFLSNGVAANDKLLLSSNRITAIVNASVEVVNVFFEGIQYIKVPVTDARDSRLYDFFDPIADLIHTIDMRQGRTLLHCMAGVSRSASLCLAYLMKYHSMSLLDAHTWTKSRRPIIRPNNGFWEQLINYEFKLFNNNTVRMINSPVGNIPDIYEKDLRMMISM.

The 142-residue stretch at 21 to 162 (SFSQITRSLF…LINYEFKLFN (142 aa)) folds into the Tyrosine-protein phosphatase domain. The tract at residues 43–128 (LSSNRITAIV…AYLMKYHSMS (86 aa)) is sufficient for mitochondrial localization. Cys-106 (phosphocysteine intermediate) is an active-site residue.

It belongs to the protein-tyrosine phosphatase family. Non-receptor class dual specificity subfamily. As to quaternary structure, microtubule inner protein component of sperm flagellar doublet microtubules. In terms of tissue distribution, expressed in testis.

It localises to the cytoplasm. Its subcellular location is the nucleus. The protein resides in the mitochondrion inner membrane. The protein localises to the cytoskeleton. It is found in the flagellum axoneme. It carries out the reaction O-phospho-L-tyrosyl-[protein] + H2O = L-tyrosyl-[protein] + phosphate. The enzyme catalyses O-phospho-L-seryl-[protein] + H2O = L-seryl-[protein] + phosphate. It catalyses the reaction O-phospho-L-threonyl-[protein] + H2O = L-threonyl-[protein] + phosphate. In terms of biological role, protein phosphatase component of the sperm flagellar doublet microtubules. May act as a regulator of sperm motility by mediating dephosphorylation of sperm doublet microtubule proteins. Can dephosphorylate single and diphosphorylated synthetic MAPK peptides, with preference for the phosphotyrosine and diphosphorylated forms over phosphothreonine. In Homo sapiens (Human), this protein is Dual specificity protein phosphatase 21 (DUSP21).